A 714-amino-acid chain; its full sequence is G protein-coupled receptor kinase 2 (714 aa).

The N-terminal stretch occupies residues 1–308 (MELENIVANT…LEAQPITYKT (308 aa)). RGS domains follow at residues 53-174 (YGYV…SQHS) and 177-294 (INHK…HRYL). The segment at 141–229 (SNANPTETAE…GGGEGGGGGK (89 aa)) is disordered. Residues 154 to 175 (CNNTTANNCNNINNSNNSQHSS) are compositionally biased toward low complexity. Composition is skewed to basic and acidic residues over residues 176–190 (DINHKKLDTRNHNGD) and 199–220 (HQDDGDESVKCQEGHDDAEKGG). In terms of domain architecture, Protein kinase spans 309 to 574 (FRMYRVLGKG…GQDVMAHPFF (266 aa)). Residues 315–323 (LGKGGFGEV) and K338 each bind ATP. The active-site Proton acceptor is D435. The 66-residue stretch at 577–642 (TQLNWRRLEA…GSVSISWQNE (66 aa)) folds into the AGC-kinase C-terminal domain. S612 is modified (phosphoserine). T613 carries the phosphothreonine modification. Positions 667–714 (INAAPEPDKAGCFPFRRKKKQPARTQPIPIPEHLLTTSHSVSSTTVES) are disordered. The span at 698-714 (EHLLTTSHSVSSTTVES) shows a compositional bias: low complexity.

The protein belongs to the protein kinase superfamily. AGC Ser/Thr protein kinase family. GPRK subfamily. Expressed in all larval tissues and in adult ovaries. Larval CNS staining is localized to axons projecting to the optic lobes and the mushroom bodies, in the longitudinal connectives, and in cell bodies and nerves of the ring gland corpus allatum. Adult CNS staining is detectable only in cell bodies and processes associated with the ellipsoid body of the central complex and portions of the mushroom bodies. In the wing disk, expression is confined to a stripe that parallels the anterior/posterior boundary of the wing blade and the hinge region, and weak expression in the prospective notum.

The protein localises to the membrane. The enzyme catalyses [G-protein-coupled receptor] + ATP = [G-protein-coupled receptor]-phosphate + ADP + H(+). Its function is as follows. Specifically phosphorylates the activated forms of G protein-coupled receptors. Required during oogenesis and embryogenesis; component of a signaling pathway that functions during egg chamber maturation. The sequence is that of G protein-coupled receptor kinase 2 (Gprk2) from Drosophila melanogaster (Fruit fly).